The following is a 345-amino-acid chain: Very-long-chain 3-oxoacyl-CoA reductase (345 aa).

Residues glycine 26 to valine 46 form a helical membrane-spanning segment. Residues valine 71, aspartate 125, aspartate 133, asparagine 152, tyrosine 219, lysine 223, isoleucine 252, and serine 254 each contribute to the NADP(+) site. Tyrosine 219 (proton donor) is an active-site residue. Lysine 223 (lowers pKa of active site Tyr) is an active-site residue.

The protein belongs to the short-chain dehydrogenases/reductases (SDR) family.

It localises to the endoplasmic reticulum membrane. The catalysed reaction is a very-long-chain (3R)-3-hydroxyacyl-CoA + NADP(+) = a very-long-chain 3-oxoacyl-CoA + NADPH + H(+). It participates in lipid metabolism; fatty acid biosynthesis. Its function is as follows. Component of the microsomal membrane bound fatty acid elongation system, which produces the 26-carbon very long-chain fatty acids (VLCFA) from palmitate. Catalyzes the reduction of the 3-ketoacyl-CoA intermediate that is formed in each cycle of fatty acid elongation. VLCFAs serve as precursors for ceramide and sphingolipids. In Aspergillus fumigatus (strain CBS 144.89 / FGSC A1163 / CEA10) (Neosartorya fumigata), this protein is Very-long-chain 3-oxoacyl-CoA reductase.